A 199-amino-acid polypeptide reads, in one-letter code: Phosphatidylethanolamine N-methyltransferase (199 aa).

The Lumenal portion of the chain corresponds to 1–12; sequence MSWLLGYMDPTE. An intramembrane region (helical) is located at residues 13–33; sequence PSFVAAVITIVFNPLFWNVVA. The Lumenal segment spans residues 34–45; sequence RWEQRTRKLSRA. Residues 46–66 traverse the membrane as a helical segment; sequence FGSPHLACYSLGICILLLNIL. Over 67–93 the chain is Cytoplasmic; sequence RSHCFTQAMMSQPKMEGLDNHTTYFLG. The helical transmembrane segment at 94 to 114 threads the bilayer; sequence LAFLGWGFVFVLSSFYALGFT. S-adenosyl-L-methionine is bound at residue 98–100; the sequence is GWG. At 115–157 the chain is on the lumenal side; it reads GTFLGDYFGILKESRVTTFPFSVLDNPMYWGSTANYLGWALMH. A helical transmembrane segment spans residues 158 to 178; it reads ASPTGLLLTVLVAIVYVVALL. Over 179 to 199 the chain is Cytoplasmic; it reads YEEPFTAEIYRQKATRLHKRS. Residue 180–181 coordinates S-adenosyl-L-methionine; that stretch reads EE.

The protein belongs to the class VI-like SAM-binding methyltransferase superfamily. PEMT/PEM2 methyltransferase family. As to expression, expressed in liver (at protein level).

It localises to the endoplasmic reticulum membrane. Its subcellular location is the mitochondrion membrane. The enzyme catalyses a 1,2-diacyl-sn-glycero-3-phospho-N-methylethanolamine + S-adenosyl-L-methionine = a 1,2-diacyl-sn-glycero-3-phospho-N,N-dimethylethanolamine + S-adenosyl-L-homocysteine + H(+). The catalysed reaction is a 1,2-diacyl-sn-glycero-3-phospho-N,N-dimethylethanolamine + S-adenosyl-L-methionine = a 1,2-diacyl-sn-glycero-3-phosphocholine + S-adenosyl-L-homocysteine + H(+). It catalyses the reaction a 1,2-diacyl-sn-glycero-3-phosphoethanolamine + S-adenosyl-L-methionine = a 1,2-diacyl-sn-glycero-3-phospho-N-methylethanolamine + S-adenosyl-L-homocysteine + H(+). It carries out the reaction 1,2-di-(9Z-octadecenoyl)-sn-glycero-3-phosphoethanolamine + S-adenosyl-L-methionine = 1,2-di-(9Z-octadecenoyl)-sn-glycero-3-phospho-N-methylethanolamine + S-adenosyl-L-homocysteine + H(+). The enzyme catalyses 1,2-di-(9Z-octadecenoyl)-sn-glycero-3-phospho-N-methylethanolamine + S-adenosyl-L-methionine = 1,2-di-(9Z-octadecenoyl)-sn-glycero-3-phospho-N,N-dimethylethanolamine + S-adenosyl-L-homocysteine + H(+). The catalysed reaction is 1,2-di-(9Z-octadecenoyl)-sn-glycero-3-phospho-N,N-dimethylethanolamine + S-adenosyl-L-methionine = 1,2-di-(9Z-octadecenoyl)-sn-glycero-3-phosphocholine + S-adenosyl-L-homocysteine + H(+). It catalyses the reaction 1,2-di-(9Z,12Z-octadecadienoyl)-sn-glycero-3-phosphoethanolamine + S-adenosyl-L-methionine = 1,2-di-(9Z,12Z-octadecadienoyl)-sn-glycero-3-phospho-N-methylethanolamine + S-adenosyl-L-homocysteine + H(+). It carries out the reaction 1,2-di-(9Z,12Z-octadecadienoyl)-sn-glycero-3-phospho-N-methylethanolamine + S-adenosyl-L-methionine = 1,2-di-(9Z,12Z-octadecadienoyl)-sn-glycero-3-phospho-N,N-dimethylethanolamine + S-adenosyl-L-homocysteine + H(+). The enzyme catalyses 1,2-di-(9Z,12Z-octadecadienoyl)-sn-glycero-3-phospho-N,N-dimethylethanolamine + S-adenosyl-L-methionine = 1,2-di-(9Z,12Z-octadecadienoyl)-sn-glycero-3-phosphocholine + S-adenosyl-L-homocysteine + H(+). The catalysed reaction is 1,2-di-(9Z,12Z,15Z-octadecatrienoyl)-sn-glycero-3-phosphoethanolamine + S-adenosyl-L-methionine = 1,2-di-(9Z,12Z,15Z-octadecatrienoyl)-sn-glycero-3-phospho-N-methylethanolamine + S-adenosyl-L-homocysteine + H(+). It catalyses the reaction 1,2-di-(9Z,12Z,15Z-octadecatrienoyl)-sn-glycero-3-phospho-N-methylethanolamine + S-adenosyl-L-methionine = 1,2-di-(9Z,12Z,15Z-octadecatrienoyl)-sn-glycero-3-phospho-N,N-dimethylethanolamine + S-adenosyl-L-homocysteine + H(+). It carries out the reaction 1,2-di-(9Z,12Z,15Z-octadecatrienoyl)-sn-glycero-3-phospho-N,N-dimethylethanolamine + S-adenosyl-L-methionine = 1,2-di-(9Z,12Z,15Z-octadecatrienoyl)-sn-glycero-3-phosphocholine + S-adenosyl-L-homocysteine + H(+). The enzyme catalyses 1-hexadecanoyl-2-(4Z,7Z,10Z,13Z,16Z,19Z-docosahexaenoyl)-sn-glycero-3-phosphoethanolamine + S-adenosyl-L-methionine = 1-hexadecanoyl-2-(4Z,7Z,10Z,13Z,16Z,19Z-docosahexaenoyl)-sn-glycero-3-phospho-N-methylethanolamine + S-adenosyl-L-homocysteine + H(+). The catalysed reaction is 1-hexadecanoyl-2-(4Z,7Z,10Z,13Z,16Z,19Z-docosahexaenoyl)-sn-glycero-3-phospho-N-methylethanolamine + S-adenosyl-L-methionine = 1-hexadecanoyl-2-(4Z,7Z,10Z,13Z,16Z,19Z-docosahexaenoyl)-sn-glycero-3-phospho-N,N-dimethylethanolamine + S-adenosyl-L-homocysteine + H(+). It catalyses the reaction 1-hexadecanoyl-2-(4Z,7Z,10Z,13Z,16Z,19Z-docosahexaenoyl)-sn-glycero-3-phospho-N,N-dimethylethanolamine + S-adenosyl-L-methionine = 1-hexadecanoyl-2-(4Z,7Z,10Z,13Z,16Z,19Z-docosahexaenoyl)-sn-glycero-3-phosphocholine + S-adenosyl-L-homocysteine + H(+). It functions in the pathway phospholipid metabolism; phosphatidylcholine biosynthesis. In terms of biological role, catalyzes the three sequential steps of the methylation pathway for the biosynthesis of phosphatidylcholine, a critical and essential component for membrane structure. Uses S-adenosylmethionine (S-adenosyl-L-methionine, SAM or AdoMet) as the methyl group donor for the methylation of phosphatidylethanolamine (1,2-diacyl-sn-glycero-3-phosphoethanolamine, PE) to phosphatidylmonomethylethanolamine (1,2-diacyl-sn-glycero-3-phospho-N-methylethanolamine, PMME), PMME to phosphatidyldimethylethanolamine (1,2-diacyl-sn-glycero-3-phospho-N,N-dimethylethanolamine, PDME), and PDME to phosphatidylcholine (1,2-diacyl-sn-glycero-3-phosphocholine, PC), producing S-adenosyl-L-homocysteine in each step. The polypeptide is Phosphatidylethanolamine N-methyltransferase (Mus musculus (Mouse)).